A 348-amino-acid chain; its full sequence is Glycerol-1-phosphate dehydrogenase [NAD(P)+] (348 aa).

NAD(+) is bound by residues 94 to 98 and 116 to 119; these read GKVID and TTAS. Asp121 is a substrate binding site. Ser125 lines the NAD(+) pocket. Asp168 is a binding site for substrate. 2 residues coordinate Zn(2+): Asp168 and His248. Residue His252 participates in substrate binding. Zn(2+) is bound at residue His264.

It belongs to the glycerol-1-phosphate dehydrogenase family. As to quaternary structure, homooctamer. The cofactor is Zn(2+).

It is found in the cytoplasm. It catalyses the reaction sn-glycerol 1-phosphate + NAD(+) = dihydroxyacetone phosphate + NADH + H(+). The catalysed reaction is sn-glycerol 1-phosphate + NADP(+) = dihydroxyacetone phosphate + NADPH + H(+). It functions in the pathway membrane lipid metabolism; glycerophospholipid metabolism. Catalyzes the NAD(P)H-dependent reduction of dihydroxyacetonephosphate (DHAP or glycerone phosphate) to glycerol 1-phosphate (G1P). The G1P thus generated is used as the glycerophosphate backbone of phospholipids in the cellular membranes of Archaea. This is Glycerol-1-phosphate dehydrogenase [NAD(P)+] from Methanobrevibacter smithii (strain ATCC 35061 / DSM 861 / OCM 144 / PS).